The primary structure comprises 89 residues: UPF0250 protein Bphy_0213 (89 aa).

The protein belongs to the UPF0250 family.

The sequence is that of UPF0250 protein Bphy_0213 from Paraburkholderia phymatum (strain DSM 17167 / CIP 108236 / LMG 21445 / STM815) (Burkholderia phymatum).